A 336-amino-acid chain; its full sequence is Fructose-1,6-bisphosphatase class 1 (336 aa).

The Mg(2+) site is built by Glu90, Asp112, Leu114, and Asp115. Substrate-binding positions include 115–118 (DGSS), Asn211, and Lys277. Residue Glu283 coordinates Mg(2+).

This sequence belongs to the FBPase class 1 family. In terms of assembly, homotetramer. Mg(2+) is required as a cofactor.

It is found in the cytoplasm. It catalyses the reaction beta-D-fructose 1,6-bisphosphate + H2O = beta-D-fructose 6-phosphate + phosphate. Its pathway is carbohydrate biosynthesis; gluconeogenesis. The polypeptide is Fructose-1,6-bisphosphatase class 1 (Pseudomonas aeruginosa (strain ATCC 15692 / DSM 22644 / CIP 104116 / JCM 14847 / LMG 12228 / 1C / PRS 101 / PAO1)).